We begin with the raw amino-acid sequence, 1226 residues long: Polyamine-transporting ATPase 13A3 (1226 aa).

The Cytoplasmic segment spans residues 1–28 (MDREERKTINQGQEDEMEIYGYNLSRWK). The stretch at 29–49 (LAIVSLGVICSGGFLLLLLYW) is an intramembrane region. The Cytoplasmic segment spans residues 50–205 (MPEWRVKATC…IAVKVPSVFK (156 aa)). At serine 98 the chain carries Phosphoserine. Residues 206–226 (LLIKEVLNPFYIFQLFSVILW) form a helical membrane-spanning segment. The Lumenal portion of the chain corresponds to 227-232 (STDEYY). Residues 233–253 (YYALAIVVMSIVSIVSSLYSI) traverse the membrane as a helical segment. The Cytoplasmic segment spans residues 254–409 (RKQYVMLHDM…KPTDFKLYRD (156 aa)). Residues 410 to 430 (AYLFLLCLVAVAGIGFIYTII) traverse the membrane as a helical segment. Residues 431–448 (NSILNEVQVGVIIIESLD) lie on the Lumenal side of the membrane. Residues 449–469 (IITITVPPALPAAMTAGIVYA) form a helical membrane-spanning segment. Topologically, residues 470–940 (QRRLKKIGIF…ALITSFCVFK (471 aa)) are cytoplasmic. The active-site 4-aspartylphosphate intermediate is the aspartate 498. The Mg(2+) site is built by aspartate 498 and threonine 500. Residues 498 to 500 (DKT), phenylalanine 628, arginine 684, and aspartate 750 each bind ATP. Serine 817 bears the Phosphoserine mark. Mg(2+)-binding residues include aspartate 883 and aspartate 887. ATP is bound at residue 883–887 (DGAND). Residues 941-961 (FMALYSIIQYFSVTLLYSILS) traverse the membrane as a helical segment. A topological domain (lumenal) is located at residue asparagine 962. Residues 963–983 (LGDFQFLFIDLAIILVVVFTM) form a helical membrane-spanning segment. At 984–999 (SLNPAWKELVAQRPPS) the chain is on the cytoplasmic side. Residues 1000 to 1020 (GLISGALLFSVLSQIIICIGF) form a helical membrane-spanning segment. Over 1021–1073 (QSLGFFWVKQQPWYEVWHPKSDACNTTGSGFWNSSHVDNETELDEHNIQNYEN) the chain is Lumenal. The helical transmembrane segment at 1074 to 1094 (TTVFFISSFQYLIVAIAFSKG) threads the bilayer. Topologically, residues 1095–1105 (KPFRQPCYKNY) are cytoplasmic. A helical membrane pass occupies residues 1106–1126 (FFVFSVIFLYIFILFIMLYPV). Over 1127–1143 (ASVDQVLQIVCVPYQWR) the chain is Lumenal. The chain crosses the membrane as a helical span at residues 1144 to 1164 (VTMLIIVLVNAFVSITVEESV). The Cytoplasmic segment spans residues 1165–1226 (DRWGKCCLPW…NGSCQIITIT (62 aa)).

The protein belongs to the cation transport ATPase (P-type) (TC 3.A.3) family. Type V subfamily. In terms of tissue distribution, broadly expressed.

The protein localises to the recycling endosome membrane. It localises to the early endosome membrane. Its subcellular location is the late endosome membrane. It catalyses the reaction putrescine(out) + ATP + H2O = putrescine(in) + ADP + phosphate + H(+). ATP-driven pump involved in endocytosis-dependent polyamine transport. Uses ATP as an energy source to transfer polyamine precursor putrescine from the endosomal compartment to the cytosol. This chain is Polyamine-transporting ATPase 13A3, found in Homo sapiens (Human).